The sequence spans 475 residues: Trifunctional enzyme subunit beta, mitochondrial (475 aa).

Residues 1 to 34 (MTTILTSTFRNLSTTSKWALRFSVRPLSCSSQVQ) constitute a mitochondrion transit peptide. The residue at position 53 (Lys53) is an N6-succinyllysine. An N6-acetyllysine; alternate modification is found at Lys73. Lys73 carries the N6-succinyllysine; alternate modification. Cys139 functions as the Acyl-thioester intermediate in the catalytic mechanism. An intramembrane segment occupies 174-221 (IRHSRNMRKMMLDLNKAKTLAQRLSLLTKFRLNFLSPELPAVAEFSTN). The residue at position 189 (Lys189) is an N6-acetyllysine; alternate. Lys189 is modified (N6-succinyllysine; alternate). N6-succinyllysine occurs at positions 191, 273, and 292. Residue Lys294 is modified to N6-acetyllysine; alternate. Lys294 carries the N6-succinyllysine; alternate modification. Lys299 bears the N6-acetyllysine mark. Lys333 carries the N6-acetyllysine; alternate modification. Lys333 carries the post-translational modification N6-succinyllysine; alternate. N6-acetyllysine occurs at positions 349 and 362. Residue Cys459 is the Proton donor/acceptor of the active site.

This sequence belongs to the thiolase-like superfamily. Thiolase family. Heterotetramer of 2 alpha/HADHA and 2 beta/HADHB subunits; forms the mitochondrial trifunctional enzyme. Also purified as higher order heterooligomers including a 4 alpha/HADHA and 4 beta/HADHB heterooligomer which physiological significance remains unclear. The mitochondrial trifunctional enzyme interacts with MTLN. Interacts with RSAD2/viperin.

It is found in the mitochondrion. Its subcellular location is the mitochondrion inner membrane. It localises to the mitochondrion outer membrane. The protein localises to the endoplasmic reticulum. It catalyses the reaction an acyl-CoA + acetyl-CoA = a 3-oxoacyl-CoA + CoA. It carries out the reaction butanoyl-CoA + acetyl-CoA = 3-oxohexanoyl-CoA + CoA. The enzyme catalyses hexanoyl-CoA + acetyl-CoA = 3-oxooctanoyl-CoA + CoA. The catalysed reaction is octanoyl-CoA + acetyl-CoA = 3-oxodecanoyl-CoA + CoA. It catalyses the reaction decanoyl-CoA + acetyl-CoA = 3-oxododecanoyl-CoA + CoA. It carries out the reaction dodecanoyl-CoA + acetyl-CoA = 3-oxotetradecanoyl-CoA + CoA. The enzyme catalyses tetradecanoyl-CoA + acetyl-CoA = 3-oxohexadecanoyl-CoA + CoA. Its pathway is lipid metabolism; fatty acid beta-oxidation. Mitochondrial trifunctional enzyme catalyzes the last three of the four reactions of the mitochondrial beta-oxidation pathway. The mitochondrial beta-oxidation pathway is the major energy-producing process in tissues and is performed through four consecutive reactions breaking down fatty acids into acetyl-CoA. Among the enzymes involved in this pathway, the trifunctional enzyme exhibits specificity for long-chain fatty acids. Mitochondrial trifunctional enzyme is a heterotetrameric complex composed of two proteins, the trifunctional enzyme subunit alpha/HADHA carries the 2,3-enoyl-CoA hydratase and the 3-hydroxyacyl-CoA dehydrogenase activities, while the trifunctional enzyme subunit beta/HADHB described here bears the 3-ketoacyl-CoA thiolase activity. The protein is Trifunctional enzyme subunit beta, mitochondrial (Hadhb) of Rattus norvegicus (Rat).